We begin with the raw amino-acid sequence, 60 residues long: Large ribosomal subunit protein uL30 (60 aa).

This sequence belongs to the universal ribosomal protein uL30 family. In terms of assembly, part of the 50S ribosomal subunit.

This is Large ribosomal subunit protein uL30 from Bacillus anthracis (strain A0248).